The chain runs to 212 residues: Large ribosomal subunit protein uL3 (212 aa).

A disordered region spans residues 130–155; sequence KRGNMTHGSKNHRLPGSTGAGTTPGR.

Belongs to the universal ribosomal protein uL3 family. Part of the 50S ribosomal subunit. Forms a cluster with proteins L14 and L19.

Its function is as follows. One of the primary rRNA binding proteins, it binds directly near the 3'-end of the 23S rRNA, where it nucleates assembly of the 50S subunit. The polypeptide is Large ribosomal subunit protein uL3 (Rippkaea orientalis (strain PCC 8801 / RF-1) (Cyanothece sp. (strain PCC 8801))).